Here is a 243-residue protein sequence, read N- to C-terminus: CRISPR-associated endoribonuclease Cas6 (243 aa).

Belongs to the CRISPR-associated endoribonuclease Cas6 family. Part of the Csm effector complex that includes at least Cas10(1), Csm2(3), Csm3(5), Csm4(1); the presence of Csm5 and Cas6 may depend on the processing state of precursor crRNA. Csm with a precursor crRNA does not include Csm5, while Cas6, the enzyme probably involved in pre-crRNA processing, is found associated with a subset of the Csm complex that is probably in the process of pre-crRNA maturation. The Csm complex is elongated and slightly twisted with a maximal length of 215 Angstroms and a diameter of 75-80 Angstroms. It has been modeled to have a central protein filamant of Csm3 subunits along which the dsRNA helix of paired crRNA and target RNA binds. The filament is capped at one end by Cas10 and Csm4 and at the other end by Csm5; ssDNA is thought to bind to the N-terminal HD domain of Cas10.

Its function is as follows. CRISPR (clustered regularly interspaced short palindromic repeat) is an adaptive immune system that provides protection against mobile genetic elements (viruses, transposable elements and conjugative plasmids). CRISPR clusters contain spacers, sequences complementary to antecedent mobile elements, and target invading nucleic acids. CRISPR clusters are transcribed and processed into CRISPR RNA (crRNA). The type III-A Csm effector complex binds crRNA and acts as a crRNA-guided RNase, DNase and cyclic oligoadenylate synthase; binding of target RNA cognate to the crRNA is required for all activities. In a heterologous host this Csm effector complex restricts ssRNA phage MS2, suggesting it may target RNA viruses in vivo. Functionally, csm functions as a non-specific ssDNase. Base-pairing between crRNA and target RNA to form a ternary Csm complex activates a ssDNase activity; target RNA cleavage suppresses the ssDNase, a temporal control that prevents uncontrolled DNA degradation. Viral RNA transcripts probably tether the Csm complex to the viral genome, recruiting Cas10 ssDNA activity which is able to degrade DNA in the transcription bubble, spatially controlling the DNase activity. This protein processes pre-crRNA into individual crRNA units. The sequence is that of CRISPR-associated endoribonuclease Cas6 from Streptococcus thermophilus.